The primary structure comprises 116 residues: Ribonuclease P protein component (116 aa).

The protein belongs to the RnpA family. As to quaternary structure, consists of a catalytic RNA component (M1 or rnpB) and a protein subunit.

It carries out the reaction Endonucleolytic cleavage of RNA, removing 5'-extranucleotides from tRNA precursor.. In terms of biological role, RNaseP catalyzes the removal of the 5'-leader sequence from pre-tRNA to produce the mature 5'-terminus. It can also cleave other RNA substrates such as 4.5S RNA. The protein component plays an auxiliary but essential role in vivo by binding to the 5'-leader sequence and broadening the substrate specificity of the ribozyme. The protein is Ribonuclease P protein component of Geobacter sp. (strain M21).